We begin with the raw amino-acid sequence, 332 residues long: Ketol-acid reductoisomerase (NADP(+)) (332 aa).

One can recognise a KARI N-terminal Rossmann domain in the interval 1–182 (MAVIYYDKDC…GSNRAGILET (182 aa)). NADP(+) is bound by residues 25–28 (YGAQ) and 83–86 (DTSQ). His-108 is a catalytic residue. Gly-134 is an NADP(+) binding site. The KARI C-terminal knotted domain maps to 183–328 (TFAEETETDL…AELRSMMSWL (146 aa)). Residues Asp-191, Glu-195, Glu-227, and Glu-231 each coordinate Mg(2+). Ser-252 contributes to the substrate binding site.

Belongs to the ketol-acid reductoisomerase family. The cofactor is Mg(2+).

It carries out the reaction (2R)-2,3-dihydroxy-3-methylbutanoate + NADP(+) = (2S)-2-acetolactate + NADPH + H(+). The enzyme catalyses (2R,3R)-2,3-dihydroxy-3-methylpentanoate + NADP(+) = (S)-2-ethyl-2-hydroxy-3-oxobutanoate + NADPH + H(+). The protein operates within amino-acid biosynthesis; L-isoleucine biosynthesis; L-isoleucine from 2-oxobutanoate: step 2/4. Its pathway is amino-acid biosynthesis; L-valine biosynthesis; L-valine from pyruvate: step 2/4. Its function is as follows. Involved in the biosynthesis of branched-chain amino acids (BCAA). Catalyzes an alkyl-migration followed by a ketol-acid reduction of (S)-2-acetolactate (S2AL) to yield (R)-2,3-dihydroxy-isovalerate. In the isomerase reaction, S2AL is rearranged via a Mg-dependent methyl migration to produce 3-hydroxy-3-methyl-2-ketobutyrate (HMKB). In the reductase reaction, this 2-ketoacid undergoes a metal-dependent reduction by NADPH to yield (R)-2,3-dihydroxy-isovalerate. This Dehalococcoides mccartyi (strain ATCC BAA-2100 / JCM 16839 / KCTC 5957 / BAV1) protein is Ketol-acid reductoisomerase (NADP(+)).